A 509-amino-acid polypeptide reads, in one-letter code: Ribonuclease Y (509 aa).

The helical transmembrane segment at isoleucine 5–leucine 25 threads the bilayer. The KH domain occupies leucine 199–aspartate 265. One can recognise an HD domain in the interval alanine 325–alanine 418.

The protein belongs to the RNase Y family.

The protein localises to the cell membrane. Its function is as follows. Endoribonuclease that initiates mRNA decay. The sequence is that of Ribonuclease Y from Sulfurovum sp. (strain NBC37-1).